The sequence spans 122 residues: MRQIAEMRKEVSQHGFDVRMMEVPGMKVAIAGDGEVNYLFMLLPFRDKFKLKKRDVWLFKKLSYKFQARPFMVTFDKMLSFYPLHALEEAGEHFELDIRNSRGLMFSFDTIVSEQLQQRLVV.

This is an uncharacterized protein from Methanothermobacter thermautotrophicus (Methanobacterium thermoformicicum).